Here is a 234-residue protein sequence, read N- to C-terminus: MEAKSESTQASESWSSHPVYARYWQHYHQAMAWMRSHQSAYQKAVESVVTSPWYYPATDLAQSPAAKGGTSPKSRSKSPSASGDACRRRSRPGKPGPQRRSTEKPARFAEDNDSESDDCGIVCDLSNMVITDELRQYFAETEQHREELRRQHQLDAARLKDYVNADHGLYCDKRGRSTLPPTERPGERRQAEMKRLYGASAAKIQAMETAMQLSFDKHCDRKQPKYWPVIPLKF.

The interval 60 to 116 (LAQSPAAKGGTSPKSRSKSPSASGDACRRRSRPGKPGPQRRSTEKPARFAEDNDSES) is disordered. Residues 67–83 (KGGTSPKSRSKSPSASG) are compositionally biased toward low complexity. Basic and acidic residues predominate over residues 100–110 (RSTEKPARFAE). Residues 130 to 153 (ITDELRQYFAETEQHREELRRQHQ) are a coiled coil.

As to quaternary structure, part of the core SMN complex that contains SMN1, GEMIN2/SIP1, DDX20/GEMIN3, GEMIN4, GEMIN5, GEMIN6, GEMIN7, GEMIN8 and STRAP/UNRIP. Part of the SMN-Sm complex that contains SMN1, GEMIN2/SIP1, DDX20/GEMIN3, GEMIN4, GEMIN5, GEMIN6, GEMIN7, GEMIN8, STRAP/UNRIP and the Sm proteins SNRPB, SNRPD1, SNRPD2, SNRPD3, SNRPE, SNRPF and SNRPG. Interacts with GEMIN6; the interaction is direct. Interacts with GEMIN7; the interaction is direct. Interacts with SMN1; the interaction is direct. Interacts with GEMIN4; the interaction is direct.

It is found in the nucleus. It localises to the gem. The protein resides in the cytoplasm. The SMN complex catalyzes the assembly of small nuclear ribonucleoproteins (snRNPs), the building blocks of the spliceosome, and thereby plays an important role in the splicing of cellular pre-mRNAs. Most spliceosomal snRNPs contain a common set of Sm proteins SNRPB, SNRPD1, SNRPD2, SNRPD3, SNRPE, SNRPF and SNRPG that assemble in a heptameric protein ring on the Sm site of the small nuclear RNA to form the core snRNP (Sm core). In the cytosol, the Sm proteins SNRPD1, SNRPD2, SNRPE, SNRPF and SNRPG are trapped in an inactive 6S pICln-Sm complex by the chaperone CLNS1A that controls the assembly of the core snRNP. To assemble core snRNPs, the SMN complex accepts the trapped 5Sm proteins from CLNS1A forming an intermediate. Binding of snRNA inside 5Sm triggers eviction of the SMN complex, thereby allowing binding of SNRPD3 and SNRPB to complete assembly of the core snRNP. The chain is Gem-associated protein 8 (GEMIN8) from Bos taurus (Bovine).